The sequence spans 373 residues: MSFSVQETLFSLLQHNAISGHENAVADVMLCEFRRQAKEVWRDRLGNVVARYGSDKPDALRLMIFAHMDEVGFMVRKIEPSGFLRFERVGGPAQVTMAGSIVTLTGDKGPVMGCIGIKSYHFAKGDERTQSPSVDKLWIDIGAKDKDDAIRMGIQVGTPVTLYNPPQLLANDLVCSKALDDRLGCTALLGVADAISTMELDIAVYLVASVQEEFNIRGIVPVLRRVKPDLAIGIDITPSCDTPDLHDYSEVRINQGVGITCLNYHGRGTLAGLITPPRLIRMLEQTALEHNIPVQREVAPGVITETGYIQVEQDGIPCASLSIPCRYTHSPAEVASLRDLTDCIRLLTALAGMSAAHFPVEPDSGTTQEAHPL.

Residues histidine 67 and aspartate 180 each coordinate a divalent metal cation. The active-site Proton acceptor is the glutamate 212. A divalent metal cation is bound by residues glutamate 213, aspartate 235, and histidine 329.

This sequence belongs to the peptidase M42 family. A divalent metal cation is required as a cofactor.

The protein is Putative aminopeptidase SgcX (sgcX) of Escherichia coli (strain K12).